The chain runs to 314 residues: Transcription factor TCP20 (314 aa).

2 disordered regions span residues 1 to 91 and 295 to 314; these read MDPK…RGRR and NHEE…GSGR. Composition is skewed to basic and acidic residues over residues 38–49 and 77–89; these read DENRKPTTEIKD and SNKD…EGRG. One can recognise a TCP domain in the interval 78–132; that stretch reads NKDRHTKVEGRGRRIRMPALCAARIFQLTRELGHKSDGETIQWLLQQAEPSIIAA.

In terms of assembly, interacts with PURA1. Interacts with SPL.

It is found in the nucleus. Functionally, transcription factor that binds to the site II motif (3'-TGGGCC/T-5') in the promoter of PCNA-2 and to 3'-GCCCG/A-5' elements in the promoters of cyclin CYCB1-1 and ribosomal protein genes. The polypeptide is Transcription factor TCP20 (TCP20) (Arabidopsis thaliana (Mouse-ear cress)).